A 118-amino-acid chain; its full sequence is Vesicle-associated membrane protein 1 (118 aa).

The segment covering 1-15 has biased composition (low complexity); that stretch reads MSAPAQPPTEGAEGA. Residues 1 to 36 are disordered; sequence MSAPAQPPTEGAEGAAPGGGPPGPPPNMTSNRRLQQ. Topologically, residues 1-96 are cytoplasmic; the sequence is MSAPAQPPTE…KRKYWWKNCK (96 aa). The v-SNARE coiled-coil homology domain occupies 33–93; it reads RLQQTQAQVE…AKLKRKYWWK (61 aa). Residue Ser63 is modified to Phosphoserine. A helical; Anchor for type IV membrane protein membrane pass occupies residues 97-116; it reads MMIMLGAICAIIVVVIVIYF. The Vesicular segment spans residues 117-118; that stretch reads FA.

It belongs to the synaptobrevin family. Interacts with VAPA and VAPB.

The protein localises to the cytoplasmic vesicle. Its subcellular location is the secretory vesicle. The protein resides in the synaptic vesicle membrane. It is found in the synapse. It localises to the synaptosome. The protein localises to the cytoplasmic vesicle membrane. In terms of biological role, involved in the targeting and/or fusion of transport vesicles to their target membrane. The protein is Vesicle-associated membrane protein 1 (VAMP1) of Bos taurus (Bovine).